We begin with the raw amino-acid sequence, 123 residues long: Large ribosomal subunit protein uL29 (123 aa).

Belongs to the universal ribosomal protein uL29 family.

The sequence is that of Large ribosomal subunit protein uL29 (RPL35) from Theileria parva (East coast fever infection agent).